The sequence spans 440 residues: uncharacterized protein (440 aa).

Residues 1-17 form the signal peptide; sequence MDRFFCTVWVWSVLFGA. The N-palmitoyl cysteine moiety is linked to residue Cys-18. Cys-18 is lipidated: S-diacylglycerol cysteine. A disordered region spans residues 241–268; sequence SALQERPSSPEPVVSTIPSPEGEENSAA.

It is found in the cell membrane. This is an uncharacterized protein from Treponema pallidum (strain Nichols).